The following is a 175-amino-acid chain: MDIAIHHPWIRRPFFPFHSPSRLFDQFFGEHLLESDLFPTSTSLSPFYLRPPSFLRAPSWIDTGLSEMRLEKDRFSVNLDVKHFSPEELKVKVLGDVIEVHGKHEERQDEHGFISREFHRKYRIPADVDPLTITSSLSSDGVLTVNGPRKQAPGPERTIPITREEKPAVTAAPKK.

Met1 carries the N-acetylmethionine modification. The residue at position 19 (Ser19) is a Phosphoserine. Ser41 carries an O-linked (GlcNAc) serine glycan. 2 positions are modified to phosphoserine: Ser45 and Ser59. Residues 56-164 enclose the sHSP domain; sequence RAPSWIDTGL…PERTIPITRE (109 aa). His83 lines the Zn(2+) pocket. At Lys92 the chain carries N6-acetyllysine. Positions 104, 106, 111, and 119 each coordinate Zn(2+). The disordered stretch occupies residues 142 to 175; sequence VLTVNGPRKQAPGPERTIPITREEKPAVTAAPKK. Lys166 bears the N6-acetyllysine mark. O-linked (GlcNAc) threonine glycosylation is present at Thr170.

It belongs to the small heat shock protein (HSP20) family. In terms of assembly, heteromer composed of three CRYAA and one CRYAB subunits. Aggregates with homologous proteins, including the small heat shock protein HSPB1, to form large heteromeric complexes. Inter-subunit bridging via zinc ions enhances stability, which is crucial as there is no protein turn over in the lens. Interacts with HSPBAP1 and TTN/titin. Interacts with TMEM109; in the cellular response to DNA damage. Interacts with DES; binds rapidly during early stages of DES filament assembly and a reduced binding seen in the later stages. Interacts with TMED10; the interaction mediates the translocation from the cytoplasm into the ERGIC (endoplasmic reticulum-Golgi intermediate compartment) and thereby secretion. Interacts with ATP6V1A and with MTOR, forming a ternary complex. As to expression, lens as well as other tissues.

It is found in the cytoplasm. It localises to the nucleus. Its subcellular location is the secreted. The protein resides in the lysosome. Functionally, may contribute to the transparency and refractive index of the lens. Has chaperone-like activity, preventing aggregation of various proteins under a wide range of stress conditions. In lens epithelial cells, stabilizes the ATP6V1A protein, preventing its degradation by the proteasome. The protein is Alpha-crystallin B chain (CRYAB) of Oryctolagus cuniculus (Rabbit).